Consider the following 879-residue polypeptide: Alanine--tRNA ligase (879 aa).

Zn(2+) is bound by residues histidine 565, histidine 569, cysteine 674, and histidine 678.

It belongs to the class-II aminoacyl-tRNA synthetase family. The cofactor is Zn(2+).

The protein resides in the cytoplasm. It catalyses the reaction tRNA(Ala) + L-alanine + ATP = L-alanyl-tRNA(Ala) + AMP + diphosphate. In terms of biological role, catalyzes the attachment of alanine to tRNA(Ala) in a two-step reaction: alanine is first activated by ATP to form Ala-AMP and then transferred to the acceptor end of tRNA(Ala). Also edits incorrectly charged Ser-tRNA(Ala) and Gly-tRNA(Ala) via its editing domain. This is Alanine--tRNA ligase from Gluconobacter oxydans (strain 621H) (Gluconobacter suboxydans).